We begin with the raw amino-acid sequence, 299 residues long: ATP phosphoribosyltransferase (299 aa).

Belongs to the ATP phosphoribosyltransferase family. Long subfamily. As to quaternary structure, equilibrium between an active dimeric form, an inactive hexameric form and higher aggregates. Interconversion between the various forms is largely reversible and is influenced by the natural substrates and inhibitors of the enzyme. Mg(2+) is required as a cofactor.

It is found in the cytoplasm. It carries out the reaction 1-(5-phospho-beta-D-ribosyl)-ATP + diphosphate = 5-phospho-alpha-D-ribose 1-diphosphate + ATP. It participates in amino-acid biosynthesis; L-histidine biosynthesis; L-histidine from 5-phospho-alpha-D-ribose 1-diphosphate: step 1/9. Feedback inhibited by histidine. In terms of biological role, catalyzes the condensation of ATP and 5-phosphoribose 1-diphosphate to form N'-(5'-phosphoribosyl)-ATP (PR-ATP). Has a crucial role in the pathway because the rate of histidine biosynthesis seems to be controlled primarily by regulation of HisG enzymatic activity. The polypeptide is ATP phosphoribosyltransferase (Yersinia pseudotuberculosis serotype O:1b (strain IP 31758)).